The primary structure comprises 486 residues: Serralysin (486 aa).

His187 is a binding site for Zn(2+). The active site involves Glu188. The Zn(2+) site is built by His191 and His197. Residues Arg266, Asp269, Asp298, Gly300, Gly301, Asp303, Thr340, and Glu342 each contribute to the Ca(2+) site. Hemolysin-type calcium-binding repeat units follow at residues 345-362 and 363-380; these read IGGS…ANTL and KGGA…ADNL.

Belongs to the peptidase M10B family. Zn(2+) is required as a cofactor. It depends on Ca(2+) as a cofactor.

It is found in the secreted. It catalyses the reaction Preferential cleavage of bonds with hydrophobic residues in P1'.. The protein is Serralysin (prtA1) of Photorhabdus luminescens (Xenorhabdus luminescens).